The primary structure comprises 293 residues: Large ribosomal RNA subunit accumulation protein YCED homolog 1, chloroplastic (293 aa).

The N-terminal 42 residues, 1–42, are a transit peptide targeting the chloroplast; it reads MYYPQPTVSLAAAVALLRPSLRRHSQRASSLLRSSTPPPWVS.

Belongs to the DUF177 domain family. In terms of tissue distribution, highly expressed in shoots and leaves. Detected in roots, embryos and endosperm.

The protein resides in the plastid. It localises to the chloroplast. Plays a role in synthesis, processing and/or stability of 23S rRNA. Required for embryogenesis. May be involved in RPL23 transcript levels regulation in non-photosynthetic plastids. The protein is Large ribosomal RNA subunit accumulation protein YCED homolog 1, chloroplastic of Zea mays (Maize).